A 382-amino-acid chain; its full sequence is MTEQRPLTIALVAGETSGDILGAGLIRALKERVPNARFVGVAGPRMQAEGCEAWYEMEELAVMGIVEVLGRLRRLLHIRADLTKRFGELKPDVFVGIDAPDFNITLEGNLKKQGIKTIHYVSPSVWAWRQKRVFKIGRATDLVLAFLPFEKAFYDKYNVPCRFIGHTMADAMPLDPDKNGARDVLGIPHDAHCLALLPGSRGAEVEMLSADFLKTAQLLRQTYPDLEIVVPLVNAKRREQFERIKAEVAPDLSVHLLDGMGREAMVASDAALLASGTAALECMLAKCPMVVGYRMKPFTFWLAKRLVKTDYVSLPNLLAGRELVKELLQEECEPQKLAAALLPLLANGKTSHAMHDTFRELHQQIRCNADEQAAQAVLELAQ.

This sequence belongs to the LpxB family.

The enzyme catalyses 2-N,3-O-bis[(3R)-3-hydroxytetradecanoyl]-alpha-D-glucosaminyl 1-phosphate + UDP-2-N,3-O-bis[(3R)-3-hydroxytetradecanoyl]-alpha-D-glucosamine = lipid A disaccharide (E. coli) + UDP + H(+). It carries out the reaction a lipid X + a UDP-2-N,3-O-bis[(3R)-3-hydroxyacyl]-alpha-D-glucosamine = a lipid A disaccharide + UDP + H(+). The protein operates within glycolipid biosynthesis; lipid IV(A) biosynthesis; lipid IV(A) from (3R)-3-hydroxytetradecanoyl-[acyl-carrier-protein] and UDP-N-acetyl-alpha-D-glucosamine: step 5/6. In terms of biological role, condensation of UDP-2,3-diacylglucosamine and 2,3-diacylglucosamine-1-phosphate to form lipid A disaccharide, a precursor of lipid A, a phosphorylated glycolipid that anchors the lipopolysaccharide to the outer membrane of the cell. The chain is Lipid-A-disaccharide synthase from Escherichia coli O127:H6 (strain E2348/69 / EPEC).